A 122-amino-acid chain; its full sequence is NADPH-dependent 7-cyano-7-deazaguanine reductase (122 aa).

Cys-34 serves as the catalytic Thioimide intermediate. Asp-41 serves as the catalytic Proton donor. Residues Val-56–Leu-58 and His-75–Glu-76 each bind substrate.

This sequence belongs to the GTP cyclohydrolase I family. QueF type 1 subfamily.

The protein localises to the cytoplasm. The catalysed reaction is 7-aminomethyl-7-carbaguanine + 2 NADP(+) = 7-cyano-7-deazaguanine + 2 NADPH + 3 H(+). It functions in the pathway tRNA modification; tRNA-queuosine biosynthesis. Catalyzes the NADPH-dependent reduction of 7-cyano-7-deazaguanine (preQ0) to 7-aminomethyl-7-deazaguanine (preQ1). The protein is NADPH-dependent 7-cyano-7-deazaguanine reductase of Anaeromyxobacter dehalogenans (strain 2CP-1 / ATCC BAA-258).